Here is an 860-residue protein sequence, read N- to C-terminus: Probable beta-glucosidase A (860 aa).

The signal sequence occupies residues 1 to 19 (MRFTSIEAVALTAVSLASA). N-linked (GlcNAc...) asparagine glycosylation is found at Asn61, Asn211, and Asn252. Asp280 is an active-site residue. 11 N-linked (GlcNAc...) asparagine glycosylation sites follow: Asn315, Asn322, Asn354, Asn387, Asn442, Asn523, Asn542, Asn564, Asn658, Asn690, and Asn712.

Belongs to the glycosyl hydrolase 3 family.

The protein localises to the secreted. The catalysed reaction is Hydrolysis of terminal, non-reducing beta-D-glucosyl residues with release of beta-D-glucose.. It functions in the pathway glycan metabolism; cellulose degradation. Its function is as follows. Beta-glucosidases are one of a number of cellulolytic enzymes involved in the degradation of cellulosic biomass. Catalyzes the last step releasing glucose from the inhibitory cellobiose. The polypeptide is Probable beta-glucosidase A (bglA) (Aspergillus niger (strain ATCC MYA-4892 / CBS 513.88 / FGSC A1513)).